The following is a 452-amino-acid chain: Keratin, type II cytoskeletal 80 (452 aa).

Residues 1-82 (MAYRSCVVGF…DPAVQQQKNQ (82 aa)) form a head region. Ser45 is modified (phosphoserine). Residues 82–118 (QEKEEMKALNDKFASLIGKVQALEQRNQLLETRWSFL) form a coil 1A region. The region spanning 83–394 (EKEEMKALND…KLMEGEESRM (312 aa)) is the IF rod domain. Residues 119 to 135 (QGQGSATFDLSHHYETF) are linker 1. Residues 136 to 227 (QGRLQEELRK…TVYEQELKDL (92 aa)) form a coil 1B region. Positions 228–251 (TAQVKDVSVTVGLDSRCHIDLSGI) are linker 12. The interval 252–390 (VEEVKAQYDA…ATYHKLMEGE (139 aa)) is coil 2. The tract at residues 391–452 (ESRMDLPSAT…YLSQESEASE (62 aa)) is tail. Residues 412 to 452 (TASKSGLTKTSSRKKKNRRGPVIKITEMSEKYLSQESEASE) are disordered. The segment covering 422–432 (SSRKKKNRRGP) has biased composition (basic residues). Polar residues predominate over residues 443–452 (YLSQESEASE).

This sequence belongs to the intermediate filament family. Heterotetramer of two type I and two type II keratins.

The chain is Keratin, type II cytoskeletal 80 (Krt80) from Mus musculus (Mouse).